A 568-amino-acid polypeptide reads, in one-letter code: Proline--tRNA ligase (568 aa).

This sequence belongs to the class-II aminoacyl-tRNA synthetase family. ProS type 1 subfamily. Homodimer.

Its subcellular location is the cytoplasm. It carries out the reaction tRNA(Pro) + L-proline + ATP = L-prolyl-tRNA(Pro) + AMP + diphosphate. Catalyzes the attachment of proline to tRNA(Pro) in a two-step reaction: proline is first activated by ATP to form Pro-AMP and then transferred to the acceptor end of tRNA(Pro). As ProRS can inadvertently accommodate and process non-cognate amino acids such as alanine and cysteine, to avoid such errors it has two additional distinct editing activities against alanine. One activity is designated as 'pretransfer' editing and involves the tRNA(Pro)-independent hydrolysis of activated Ala-AMP. The other activity is designated 'posttransfer' editing and involves deacylation of mischarged Ala-tRNA(Pro). The misacylated Cys-tRNA(Pro) is not edited by ProRS. In Nitrosomonas eutropha (strain DSM 101675 / C91 / Nm57), this protein is Proline--tRNA ligase.